We begin with the raw amino-acid sequence, 243 residues long: Variant surface antigen E (243 aa).

A signal peptide spans 1 to 29 (MKKSIFSKKLLVSFGSLVTLAAIPLIAIS). Cysteine 30 is lipidated: N-palmitoyl cysteine. Residue cysteine 30 is the site of S-diacylglycerol cysteine attachment. Residues 34–243 (TDNLSQSQQP…TTSDGQNQNK (210 aa)) form a disordered region. Over residues 52–92 (GTNTENGSNNGSGSGTTNSSGGTNQSGSASGNGSSNSSVST) the composition is skewed to low complexity. Residues 93–243 (PDGQHSNPSN…TTSDGQNQNK (151 aa)) are compositionally biased toward polar residues. 11 repeat units span residues 97 to 109 (HSNP…SDPK), 110 to 122 (ESNP…SDPK), 123 to 135 (ESNP…SDGQ), 136 to 148 (HSNP…SDPK), 149 to 161 (ESNP…SDGQ), 162 to 174 (HSNP…SDGQ), 175 to 187 (HSNP…SDGQ), 188 to 200 (HSNP…SDGQ), 201 to 213 (HSNP…SDGQ), 214 to 226 (HSNP…SDGQ), and 227 to 239 (HSNP…SDGQ). The 11 X 13 AA tandem repeats stretch occupies residues 97–239 (HSNPSNPTTS…PSNPTTSDGQ (143 aa)).

The protein localises to the cell membrane. Functionally, responsible for the antigenic diversity for host adaptation. Expression in E.coli of a construct containing vlpD, vlpE, and vlpF yields antigenically distinguishable products corresponding to each gene. This chain is Variant surface antigen E (vlpE), found in Mesomycoplasma hyorhinis (Mycoplasma hyorhinis).